The sequence spans 103 residues: uncharacterized protein (103 aa).

In terms of domain architecture, EthD spans Ala12–Ser88.

This is an uncharacterized protein from Rhodococcus erythropolis (Arthrobacter picolinophilus).